The primary structure comprises 804 residues: Ribonucleoside-diphosphate reductase large subunit-like protein (804 aa).

Belongs to the ribonucleoside diphosphate reductase large chain family. As to quaternary structure, the genome of human herpesvirus-6 does not code for a ribonucleotide reductase small subunit.

Its subcellular location is the virion. It is found in the host cytoplasm. Does not possess a ribonucleotide reductase activity. Betaherpesviruses probably use another strategy to expand the dNTP pool in a quiescent host cell. The polypeptide is Ribonucleoside-diphosphate reductase large subunit-like protein (Human herpesvirus 6B (strain Z29) (HHV-6 variant B)).